Here is a 485-residue protein sequence, read N- to C-terminus: MSSSPTAQPSQDQLATKAQAWSALFSEPMSDLVKRYTSSVFFDKRLWQADIAGSLAHADMLAAQGIISADDHAAIRRGMATITQEIESGAFEWKLDLEDVHLNIEARLTQLVGDAGKRLHTGRSRNDQVATDVRLWLRGEIDMIADLLKELQRSLVDVAEQNVEVILPGFTHLQVAQPVSFAHHMLAYVEMFARDAERMQDVRRRTNVLPLGSAALAGTTYPLDRERVARTLGMEGVCQNSLDAVSDRDFAIEFTAAASLCMVHVSRLSEELIIWMSQNFGFIRIADRFTTGSSIMPQKKNPDVPELARGKTGRVVGHLMGLITLMKGQPLAYNKDNQEDKEPLFDTVDTLKDTLRIFAEMVGGQRDPATGRKEGGITVNPQAMEQAAQKGYATATDLADYLVKKGLPFRDAHETVAHAVKAATSHGVDLSELPLTVLQGFHPAIGKDVFDALSLRGSLNARNTLGGTAPAQVRTQLARHRARLG.

It belongs to the lyase 1 family. Argininosuccinate lyase subfamily.

Its subcellular location is the cytoplasm. The catalysed reaction is 2-(N(omega)-L-arginino)succinate = fumarate + L-arginine. The protein operates within amino-acid biosynthesis; L-arginine biosynthesis; L-arginine from L-ornithine and carbamoyl phosphate: step 3/3. This chain is Argininosuccinate lyase, found in Paracidovorax citrulli (strain AAC00-1) (Acidovorax citrulli).